The sequence spans 315 residues: Zinc finger transcription factor ref-2 (315 aa).

Residues 83-112 (VQCLWETNGQVCMHVCQNSGELSTHISSNH) form a C2H2-type 1; atypical zinc finger. Residues 124–146 (KGCDREFKMFKAKYKLVNHMRVH) form a C2H2-type 2; degenerate zinc finger. 3 C2H2-type zinc fingers span residues 152 to 174 (FLCD…KRIH), 180 to 204 (FQCT…MHVH), and 210 to 234 (YSCM…TKVH). The interval 225 to 270 (SSLRKHTKVHENEKKSQLSPEHDESSDSGNASIGTPTTDESLTFSP) is disordered. The segment covering 233–249 (VHENEKKSQLSPEHDES) has biased composition (basic and acidic residues). A compositionally biased stretch (polar residues) spans 251–270 (DSGNASIGTPTTDESLTFSP).

In terms of assembly, interacts with TCF transcription factor pop-1; the interaction is direct and facilitates transcriptional activation; transcription may be repressed by beta-catenin/sys-1.

It localises to the nucleus. The protein localises to the cytoplasm. In terms of biological role, transcription factor. Modulates expression of target genes by binding to regulatory elements. Required for normal cell division timing and cell positioning in anterior lineages, acting in a cell-autonomous manner. Required for development, fusion and fate of cells of the ventral epidermis, the Pn.p cells, during larval development; acts in concert with homeobox genes lin-39 and mab-5. Required for the specification of the AIY interneuron. In complex with TCF transcription factor pop-1, positively modulates expression of LIM/homeobox protein ttx-3 in anterior daughter cells of the SMDD/AIY neuron lineage. In Caenorhabditis elegans, this protein is Zinc finger transcription factor ref-2.